We begin with the raw amino-acid sequence, 375 residues long: Probable Na(+)/H(+) antiporter GerT (375 aa).

Transmembrane regions (helical) follow at residues P27–I47, A89–I109, H112–L132, T145–M165, I183–M203, L204–F224, Y226–I246, P261–F281, L288–L308, and E350–L370.

Belongs to the monovalent cation:proton antiporter 2 (CPA2) transporter (TC 2.A.37) family.

The protein resides in the membrane. Contributes to the success of spore outgrowth from the germinated state during alkaline or Na(+) stress. Does not have a significant role in germination. The chain is Probable Na(+)/H(+) antiporter GerT (gerT) from Bacillus cereus.